We begin with the raw amino-acid sequence, 330 residues long: ATP-dependent (S)-NAD(P)H-hydrate dehydratase (330 aa).

The YjeF C-terminal domain maps to 36–327; the sequence is VIPLVRNTIP…QEINSAFKKL (292 aa). (6S)-NADPHX-binding positions include Gly-136 and 189–195; that span reads NFMEFTR. Residues 229-233 and 248-257 each bind ATP; these read KGEED and GSGRRCGGQG. Asp-258 is a (6S)-NADPHX binding site.

The protein belongs to the NnrD/CARKD family. The cofactor is Mg(2+).

The catalysed reaction is (6S)-NADHX + ATP = ADP + phosphate + NADH + H(+). The enzyme catalyses (6S)-NADPHX + ATP = ADP + phosphate + NADPH + H(+). In terms of biological role, catalyzes the dehydration of the S-form of NAD(P)HX at the expense of ATP, which is converted to ADP. Together with NAD(P)HX epimerase, which catalyzes the epimerization of the S- and R-forms, the enzyme allows the repair of both epimers of NAD(P)HX, a damaged form of NAD(P)H that is a result of enzymatic or heat-dependent hydration. This Danio rerio (Zebrafish) protein is ATP-dependent (S)-NAD(P)H-hydrate dehydratase.